A 395-amino-acid chain; its full sequence is General transcription factor IIH subunit 2 (395 aa).

Positions 60–236 constitute a VWFA domain; it reads HLYVVVDGSR…HYKELLTHHV (177 aa). Tyr95 bears the Phosphotyrosine mark. The C4-type zinc finger occupies 291–308; the sequence is CPQCRAKYCELPVECKIC.

It belongs to the GTF2H2 family. In terms of assembly, component of the TFIID-containing RNA polymerase II pre-initiation complex that is composed of TBP and at least GTF2A1, GTF2A2, GTF2E1, GTF2E2, GTF2F1, GTF2H2, GTF2H3, GTF2H4, GTF2H5, GTF2B, TCEA1, ERCC2 and ERCC3. Component of the 7-subunit TFIIH core complex composed of XPB/ERCC3, XPD/ERCC2, GTF2H1, GTF2H2, GTF2H3, GTF2H4 and GTF2H5, which is active in NER. The core complex associates with the 3-subunit CDK-activating kinase (CAK) module composed of CCNH/cyclin H, CDK7 and MNAT1 to form the 10-subunit holoenzyme (holo-TFIIH) active in transcription. Interacts with XPB, XPD, GTF2H1 and GTF2H3.

The protein resides in the nucleus. Component of the general transcription and DNA repair factor IIH (TFIIH) core complex, which is involved in general and transcription-coupled nucleotide excision repair (NER) of damaged DNA and, when complexed to CAK, in RNA transcription by RNA polymerase II. In NER, TFIIH acts by opening DNA around the lesion to allow the excision of the damaged oligonucleotide and its replacement by a new DNA fragment. In transcription, TFIIH has an essential role in transcription initiation. When the pre-initiation complex (PIC) has been established, TFIIH is required for promoter opening and promoter escape. Phosphorylation of the C-terminal tail (CTD) of the largest subunit of RNA polymerase II by the kinase module CAK controls the initiation of transcription. The N-terminus of GTF2H2 interacts with and regulates XPD whereas an intact C-terminus is required for a successful escape of RNAP II form the promoter. This is General transcription factor IIH subunit 2 (GTF2H2) from Bos taurus (Bovine).